The sequence spans 1099 residues: Carbamoyl phosphate synthase large chain (1099 aa).

The tract at residues 1 to 402 (MPKREDIKRI…ALGKALRSLE (402 aa)) is carboxyphosphate synthetic domain. 12 residues coordinate ATP: arginine 129, arginine 169, glycine 175, glycine 176, glutamate 208, valine 210, glutamate 215, glycine 241, isoleucine 242, histidine 243, glutamine 285, and glutamate 299. Residues 133–328 (KETMEKAGLE…IAKVAALLAV (196 aa)) enclose the ATP-grasp 1 domain. Glutamine 285, glutamate 299, and asparagine 301 together coordinate Mg(2+). 3 residues coordinate Mn(2+): glutamine 285, glutamate 299, and asparagine 301. The segment at 403–541 (LDAAPKLDLE…STYNGVENEA (139 aa)) is oligomerization domain. Residues 542–944 (VPSDREKIMI…AFAKAQIAAG (403 aa)) form a carbamoyl phosphate synthetic domain region. Positions 666–857 (AKLLKQIGLK…VARIAAKIMV (192 aa)) constitute an ATP-grasp 2 domain. The ATP site is built by arginine 702, lysine 741, leucine 743, glutamate 748, glycine 773, valine 774, histidine 775, serine 776, glutamine 816, and glutamate 828. Residues glutamine 816, glutamate 828, and asparagine 830 each coordinate Mg(2+). Positions 816, 828, and 830 each coordinate Mn(2+). Positions 945–1099 (NPLPTTGAIL…VRRLTDTWKM (155 aa)) constitute an MGS-like domain. Residues 945–1099 (NPLPTTGAIL…VRRLTDTWKM (155 aa)) are allosteric domain.

It belongs to the CarB family. In terms of assembly, composed of two chains; the small (or glutamine) chain promotes the hydrolysis of glutamine to ammonia, which is used by the large (or ammonia) chain to synthesize carbamoyl phosphate. Tetramer of heterodimers (alpha,beta)4. It depends on Mg(2+) as a cofactor. Mn(2+) is required as a cofactor.

It carries out the reaction hydrogencarbonate + L-glutamine + 2 ATP + H2O = carbamoyl phosphate + L-glutamate + 2 ADP + phosphate + 2 H(+). The enzyme catalyses hydrogencarbonate + NH4(+) + 2 ATP = carbamoyl phosphate + 2 ADP + phosphate + 2 H(+). The protein operates within amino-acid biosynthesis; L-arginine biosynthesis; carbamoyl phosphate from bicarbonate: step 1/1. Its pathway is pyrimidine metabolism; UMP biosynthesis via de novo pathway; (S)-dihydroorotate from bicarbonate: step 1/3. Large subunit of the glutamine-dependent carbamoyl phosphate synthetase (CPSase). CPSase catalyzes the formation of carbamoyl phosphate from the ammonia moiety of glutamine, carbonate, and phosphate donated by ATP, constituting the first step of 2 biosynthetic pathways, one leading to arginine and/or urea and the other to pyrimidine nucleotides. The large subunit (synthetase) binds the substrates ammonia (free or transferred from glutamine from the small subunit), hydrogencarbonate and ATP and carries out an ATP-coupled ligase reaction, activating hydrogencarbonate by forming carboxy phosphate which reacts with ammonia to form carbamoyl phosphate. In Thermotoga sp. (strain RQ2), this protein is Carbamoyl phosphate synthase large chain.